Here is a 362-residue protein sequence, read N- to C-terminus: MNSLVSTTAIEAQSQAAASEEVVRLTDVKRRFGTTAALDGISLTVKRGEILGIIGRSGAGKSTLIRCLNGLERADSGEILIEGRDITGLSEQELQPLRRRIGMIFQHFNLLSAKTVEENVALPLKIEGLAKSERLKRAHELLELVGLADKAKAYPASLSGGQKQRVGIARALAARPALLLSDEATSALDPETTRSILALLKDINRKLGLTILLITHEMEVVRGIADRVAVIDAGRIVEEGQVWSVFANPQAEITGSLLCGIRPQLPEHIAGRLSAAAGSEAILSVDLAGPQAQGALFAELSAALPHSFRLVHGGIDHIQNQPVARFFIAVPARDPALAGKVEQFLTARSARVEVLGYDTDHA.

Residues 23–258 (VRLTDVKRRF…PQAEITGSLL (236 aa)) form the ABC transporter domain. Residue 55 to 62 (GRSGAGKS) participates in ATP binding.

It belongs to the ABC transporter superfamily. Methionine importer (TC 3.A.1.24) family. As to quaternary structure, the complex is composed of two ATP-binding proteins (MetN), two transmembrane proteins (MetI) and a solute-binding protein (MetQ).

The protein resides in the cell inner membrane. The enzyme catalyses L-methionine(out) + ATP + H2O = L-methionine(in) + ADP + phosphate + H(+). It carries out the reaction D-methionine(out) + ATP + H2O = D-methionine(in) + ADP + phosphate + H(+). Part of the ABC transporter complex MetNIQ involved in methionine import. Responsible for energy coupling to the transport system. This is Methionine import ATP-binding protein MetN from Rhizobium johnstonii (strain DSM 114642 / LMG 32736 / 3841) (Rhizobium leguminosarum bv. viciae).